The primary structure comprises 218 residues: Hypoxanthine-guanine phosphoribosyltransferase (218 aa).

The residue at position 2 (Ala2) is an N-acetylalanine. Lys69 is a binding site for GMP. Residue Lys103 is modified to N6-acetyllysine. Lys115 is covalently cross-linked (Glycyl lysine isopeptide (Lys-Gly) (interchain with G-Cter in SUMO1); alternate). A Glycyl lysine isopeptide (Lys-Gly) (interchain with G-Cter in SUMO2); alternate cross-link involves residue Lys115. Residues 134 to 142 (EDIIDTGKT), Lys166, 186 to 188 (KFV), and Asp194 contribute to the GMP site. Asp138 acts as the Proton acceptor in catalysis. Phosphothreonine is present on Thr142. Mg(2+) is bound at residue Asp194.

It belongs to the purine/pyrimidine phosphoribosyltransferase family. Homotetramer. The cofactor is Mg(2+).

Its subcellular location is the cytoplasm. It carries out the reaction IMP + diphosphate = hypoxanthine + 5-phospho-alpha-D-ribose 1-diphosphate. It catalyses the reaction GMP + diphosphate = guanine + 5-phospho-alpha-D-ribose 1-diphosphate. It participates in purine metabolism; IMP biosynthesis via salvage pathway; IMP from hypoxanthine: step 1/1. Its function is as follows. Converts guanine to guanosine monophosphate, and hypoxanthine to inosine monophosphate. Transfers the 5-phosphoribosyl group from 5-phosphoribosylpyrophosphate onto the purine. Plays a central role in the generation of purine nucleotides through the purine salvage pathway. This is Hypoxanthine-guanine phosphoribosyltransferase (HPRT1) from Canis lupus familiaris (Dog).